Reading from the N-terminus, the 494-residue chain is Beta-glucosidase 29 (494 aa).

An N-terminal signal peptide occupies residues 1 to 28 (MAWLGIGMGRQIVPVLVFVAVLCSGVDA). Residue Q49 participates in a beta-D-glucoside binding. Residue N103 is glycosylated (N-linked (GlcNAc...) asparagine). Residues H138 and 183–184 (NE) each bind a beta-D-glucoside. E184 functions as the Proton donor in the catalytic mechanism. C203 and C211 form a disulfide bridge. N-linked (GlcNAc...) asparagine glycosylation is present at N263. Residue Y327 coordinates a beta-D-glucoside. N352 carries an N-linked (GlcNAc...) asparagine glycan. E398 provides a ligand contact to a beta-D-glucoside. E398 serves as the catalytic Nucleophile. N406 is a glycosylation site (N-linked (GlcNAc...) asparagine). A beta-D-glucoside is bound by residues W447, 454–455 (EW), and F463.

Belongs to the glycosyl hydrolase 1 family.

The enzyme catalyses Hydrolysis of terminal, non-reducing beta-D-glucosyl residues with release of beta-D-glucose.. The protein is Beta-glucosidase 29 (BGLU29) of Oryza sativa subsp. japonica (Rice).